The primary structure comprises 451 residues: NADP-specific glutamate dehydrogenase (451 aa).

K114 is an active-site residue.

It belongs to the Glu/Leu/Phe/Val dehydrogenases family. Homohexamer.

The catalysed reaction is L-glutamate + NADP(+) + H2O = 2-oxoglutarate + NH4(+) + NADPH + H(+). The polypeptide is NADP-specific glutamate dehydrogenase (GDH2) (Fusarium fujikuroi (Bakanae and foot rot disease fungus)).